Reading from the N-terminus, the 344-residue chain is GTP 3',8-cyclase (344 aa).

The Radical SAM core domain maps to P19–D239. R28 provides a ligand contact to GTP. Positions 35 and 39 each coordinate [4Fe-4S] cluster. Y41 provides a ligand contact to S-adenosyl-L-methionine. [4Fe-4S] cluster is bound at residue C42. Position 77 (R77) interacts with GTP. G81 is an S-adenosyl-L-methionine binding site. T111 serves as a coordination point for GTP. S135 contacts S-adenosyl-L-methionine. K171 serves as a coordination point for GTP. Residue M205 coordinates S-adenosyl-L-methionine. C268 and C271 together coordinate [4Fe-4S] cluster. R273–R275 lines the GTP pocket. C285 lines the [4Fe-4S] cluster pocket.

It belongs to the radical SAM superfamily. MoaA family. As to quaternary structure, monomer and homodimer. [4Fe-4S] cluster is required as a cofactor.

It carries out the reaction GTP + AH2 + S-adenosyl-L-methionine = (8S)-3',8-cyclo-7,8-dihydroguanosine 5'-triphosphate + 5'-deoxyadenosine + L-methionine + A + H(+). It functions in the pathway cofactor biosynthesis; molybdopterin biosynthesis. Functionally, catalyzes the cyclization of GTP to (8S)-3',8-cyclo-7,8-dihydroguanosine 5'-triphosphate. The chain is GTP 3',8-cyclase from Rhodopseudomonas palustris (strain TIE-1).